The following is a 153-amino-acid chain: Ribosome maturation factor RimP (153 aa).

It belongs to the RimP family.

Its subcellular location is the cytoplasm. Its function is as follows. Required for maturation of 30S ribosomal subunits. The protein is Ribosome maturation factor RimP of Christiangramia forsetii (strain DSM 17595 / CGMCC 1.15422 / KT0803) (Gramella forsetii).